The following is a 394-amino-acid chain: Cell division protein FtsZ (394 aa).

Residues 21-25, 108-110, glutamate 139, arginine 143, and aspartate 187 contribute to the GTP site; these read GGGGN and GTG.

Belongs to the FtsZ family. Homodimer. Polymerizes to form a dynamic ring structure in a strictly GTP-dependent manner. Interacts directly with several other division proteins. Interacts with the SulA inhibitor.

Its subcellular location is the cytoplasm. Essential cell division protein that forms a contractile ring structure (Z ring) at the future cell division site. The regulation of the ring assembly controls the timing and the location of cell division. One of the functions of the FtsZ ring is to recruit other cell division proteins to the septum to produce a new cell wall between the dividing cells. Binds GTP and shows GTPase activity. The polypeptide is Cell division protein FtsZ (Pseudomonas aeruginosa (strain ATCC 15692 / DSM 22644 / CIP 104116 / JCM 14847 / LMG 12228 / 1C / PRS 101 / PAO1)).